The chain runs to 169 residues: Deoxyuridine 5'-triphosphate nucleotidohydrolase (169 aa).

Over residues 1 to 10 (MAENQINSPE) the composition is skewed to polar residues. Positions 1-25 (MAENQINSPEITEPSPKVQKLDHPE) are disordered. Residues 91-93 (RSG), 105-108 (GVID), Gly116, Arg159, and 164-165 (FG) each bind substrate.

The protein belongs to the dUTPase family. Homodimer. Mg(2+) is required as a cofactor. As to expression, vegetative and floral merismatic cells and provascular and vascular merismatic derivatives.

The enzyme catalyses dUTP + H2O = dUMP + diphosphate + H(+). The protein operates within pyrimidine metabolism; dUMP biosynthesis; dUMP from dCTP (dUTP route): step 2/2. Its function is as follows. This enzyme is involved in nucleotide metabolism: it produces dUMP, the immediate precursor of thymidine nucleotides and it decreases the intracellular concentration of dUTP so that uracil cannot be incorporated into DNA. It may have as well a metabolic role in merismatic cells. The sequence is that of Deoxyuridine 5'-triphosphate nucleotidohydrolase from Solanum lycopersicum (Tomato).